The chain runs to 119 residues: MDKIINAVETNYKKEDIPEIRPGDTVRVNVKVVEGEGEKKRERIQPFEGIVIKIRGAGLGRSFTVRKMGADRVGVERIFPFHSPSISSIEVLKKGKTRRAKLYYLRDVKGKIRIKERKD.

It belongs to the bacterial ribosomal protein bL19 family.

This protein is located at the 30S-50S ribosomal subunit interface and may play a role in the structure and function of the aminoacyl-tRNA binding site. The chain is Large ribosomal subunit protein bL19 from Petrotoga mobilis (strain DSM 10674 / SJ95).